The following is a 328-amino-acid chain: Acetyl-coenzyme A carboxylase carboxyl transferase subunit alpha (328 aa).

One can recognise a CoA carboxyltransferase C-terminal domain in the interval 42-296; sequence SFKEQLSILK…KESLISELHF (255 aa).

This sequence belongs to the AccA family. As to quaternary structure, acetyl-CoA carboxylase is a heterohexamer composed of biotin carboxyl carrier protein (accB), biotin carboxylase (accC) and two subunits each of ACCase subunit alpha (accA) and ACCase subunit beta (accD).

It localises to the plastid. It is found in the chloroplast. The enzyme catalyses N(6)-carboxybiotinyl-L-lysyl-[protein] + acetyl-CoA = N(6)-biotinyl-L-lysyl-[protein] + malonyl-CoA. It participates in lipid metabolism; malonyl-CoA biosynthesis; malonyl-CoA from acetyl-CoA: step 1/1. Functionally, component of the acetyl coenzyme A carboxylase (ACC) complex. First, biotin carboxylase catalyzes the carboxylation of biotin on its carrier protein (BCCP) and then the CO(2) group is transferred by the carboxyltransferase to acetyl-CoA to form malonyl-CoA. This chain is Acetyl-coenzyme A carboxylase carboxyl transferase subunit alpha, found in Gracilaria tenuistipitata var. liui (Red alga).